Reading from the N-terminus, the 300-residue chain is NAD kinase (300 aa).

Asp80 functions as the Proton acceptor in the catalytic mechanism. NAD(+) contacts are provided by residues 80–81 (DG), 154–155 (ND), Arg165, Arg182, Asp184, 195–200 (TAYALS), and Gln253.

The protein belongs to the NAD kinase family. It depends on a divalent metal cation as a cofactor.

The protein localises to the cytoplasm. The catalysed reaction is NAD(+) + ATP = ADP + NADP(+) + H(+). Involved in the regulation of the intracellular balance of NAD and NADP, and is a key enzyme in the biosynthesis of NADP. Catalyzes specifically the phosphorylation on 2'-hydroxyl of the adenosine moiety of NAD to yield NADP. The protein is NAD kinase of Aromatoleum aromaticum (strain DSM 19018 / LMG 30748 / EbN1) (Azoarcus sp. (strain EbN1)).